The following is a 64-amino-acid chain: Large ribosomal subunit protein bL35 (64 aa).

A compositionally biased stretch (basic residues) spans 1-14 (MKQKTHKGTAKRIK). Residues 1–48 (MKQKTHKGTAKRIKVTGSGKLRREQANRRHLLEGKPSKRTRRLKGTED) are disordered. The span at 21–36 (LRREQANRRHLLEGKP) shows a compositional bias: basic and acidic residues.

Belongs to the bacterial ribosomal protein bL35 family.

This chain is Large ribosomal subunit protein bL35, found in Corynebacterium aurimucosum (strain ATCC 700975 / DSM 44827 / CIP 107346 / CN-1) (Corynebacterium nigricans).